Reading from the N-terminus, the 104-residue chain is Turripeptide OL55 (104 aa).

Post-translationally, contains 8 disulfide bonds. As to expression, expressed by the venom duct.

The protein resides in the secreted. Functionally, acts as a neurotoxin by inhibiting an ion channel. In Iotyrris olangoensis (Sea snail), this protein is Turripeptide OL55.